Consider the following 398-residue polypeptide: DNA polymerase IV (398 aa).

Residues 5–187 (IFLVDMNAFF…LSIKSMHGVG (183 aa)) enclose the UmuC domain. Positions 9 and 105 each coordinate Mg(2+). Glu106 is an active-site residue.

The protein belongs to the DNA polymerase type-Y family. In terms of assembly, monomer. Mg(2+) is required as a cofactor.

It is found in the cytoplasm. The enzyme catalyses DNA(n) + a 2'-deoxyribonucleoside 5'-triphosphate = DNA(n+1) + diphosphate. Its function is as follows. Poorly processive, error-prone DNA polymerase involved in untargeted mutagenesis. Copies undamaged DNA at stalled replication forks, which arise in vivo from mismatched or misaligned primer ends. These misaligned primers can be extended by PolIV. Exhibits no 3'-5' exonuclease (proofreading) activity. May be involved in translesional synthesis, in conjunction with the beta clamp from PolIII. The chain is DNA polymerase IV from Alkaliphilus oremlandii (strain OhILAs) (Clostridium oremlandii (strain OhILAs)).